We begin with the raw amino-acid sequence, 169 residues long: Peptide deformylase (169 aa).

The Fe cation site is built by cysteine 91 and histidine 133. Glutamate 134 is a catalytic residue. Histidine 137 serves as a coordination point for Fe cation.

It belongs to the polypeptide deformylase family. Requires Fe(2+) as cofactor.

The catalysed reaction is N-terminal N-formyl-L-methionyl-[peptide] + H2O = N-terminal L-methionyl-[peptide] + formate. Removes the formyl group from the N-terminal Met of newly synthesized proteins. Requires at least a dipeptide for an efficient rate of reaction. N-terminal L-methionine is a prerequisite for activity but the enzyme has broad specificity at other positions. In Escherichia coli (strain SMS-3-5 / SECEC), this protein is Peptide deformylase.